A 212-amino-acid polypeptide reads, in one-letter code: Adenylate kinase (212 aa).

G10–T15 serves as a coordination point for ATP. An NMP region spans residues A30–I59. AMP is bound by residues R36, E57–I59, G85–R88, and Q92. The LID stretch occupies residues G122–D160. R123 contacts ATP. Zn(2+)-binding residues include C126 and C129. I132 to Y133 is a binding site for ATP. The Zn(2+) site is built by C146 and C149. R157 and R168 together coordinate AMP. Residue K196 participates in ATP binding.

Belongs to the adenylate kinase family. In terms of assembly, monomer.

The protein resides in the cytoplasm. It carries out the reaction AMP + ATP = 2 ADP. It participates in purine metabolism; AMP biosynthesis via salvage pathway; AMP from ADP: step 1/1. Catalyzes the reversible transfer of the terminal phosphate group between ATP and AMP. Plays an important role in cellular energy homeostasis and in adenine nucleotide metabolism. The chain is Adenylate kinase from Rickettsia conorii (strain ATCC VR-613 / Malish 7).